Reading from the N-terminus, the 176-residue chain is ATP synthase subunit b (176 aa).

Residues Ser14–Leu34 form a helical membrane-spanning segment.

This sequence belongs to the ATPase B chain family. F-type ATPases have 2 components, F(1) - the catalytic core - and F(0) - the membrane proton channel. F(1) has five subunits: alpha(3), beta(3), gamma(1), delta(1), epsilon(1). F(0) has three main subunits: a(1), b(2) and c(10-14). The alpha and beta chains form an alternating ring which encloses part of the gamma chain. F(1) is attached to F(0) by a central stalk formed by the gamma and epsilon chains, while a peripheral stalk is formed by the delta and b chains.

It localises to the cell membrane. F(1)F(0) ATP synthase produces ATP from ADP in the presence of a proton or sodium gradient. F-type ATPases consist of two structural domains, F(1) containing the extramembraneous catalytic core and F(0) containing the membrane proton channel, linked together by a central stalk and a peripheral stalk. During catalysis, ATP synthesis in the catalytic domain of F(1) is coupled via a rotary mechanism of the central stalk subunits to proton translocation. In terms of biological role, component of the F(0) channel, it forms part of the peripheral stalk, linking F(1) to F(0). This Enterococcus faecalis (strain ATCC 700802 / V583) protein is ATP synthase subunit b.